A 370-amino-acid chain; its full sequence is Queuine tRNA-ribosyltransferase (370 aa).

Aspartate 89 serves as the catalytic Proton acceptor. Substrate-binding positions include 89-93, aspartate 143, and glycine 214; that span reads DSGGF. The RNA binding stretch occupies residues 245 to 251; the sequence is GVGKPED. The active-site Nucleophile is aspartate 264. The tract at residues 269-273 is RNA binding; important for wobble base 34 recognition; that stretch reads TRNAR. Zn(2+)-binding residues include cysteine 302, cysteine 304, cysteine 307, and histidine 333.

It belongs to the queuine tRNA-ribosyltransferase family. Homodimer. Within each dimer, one monomer is responsible for RNA recognition and catalysis, while the other monomer binds to the replacement base PreQ1. Requires Zn(2+) as cofactor.

The catalysed reaction is 7-aminomethyl-7-carbaguanine + guanosine(34) in tRNA = 7-aminomethyl-7-carbaguanosine(34) in tRNA + guanine. It functions in the pathway tRNA modification; tRNA-queuosine biosynthesis. In terms of biological role, catalyzes the base-exchange of a guanine (G) residue with the queuine precursor 7-aminomethyl-7-deazaguanine (PreQ1) at position 34 (anticodon wobble position) in tRNAs with GU(N) anticodons (tRNA-Asp, -Asn, -His and -Tyr). Catalysis occurs through a double-displacement mechanism. The nucleophile active site attacks the C1' of nucleotide 34 to detach the guanine base from the RNA, forming a covalent enzyme-RNA intermediate. The proton acceptor active site deprotonates the incoming PreQ1, allowing a nucleophilic attack on the C1' of the ribose to form the product. After dissociation, two additional enzymatic reactions on the tRNA convert PreQ1 to queuine (Q), resulting in the hypermodified nucleoside queuosine (7-(((4,5-cis-dihydroxy-2-cyclopenten-1-yl)amino)methyl)-7-deazaguanosine). In Buchnera aphidicola subsp. Acyrthosiphon pisum (strain 5A), this protein is Queuine tRNA-ribosyltransferase.